Here is a 281-residue protein sequence, read N- to C-terminus: NADPH-dependent 7-cyano-7-deazaguanine reductase (281 aa).

Residue Ile87–Ser89 coordinates substrate. Residue Ser89–Lys90 participates in NADPH binding. Catalysis depends on Cys188, which acts as the Thioimide intermediate. Residue Asp195 is the Proton donor of the active site. Residue His227 to Glu228 participates in substrate binding. Arg256–Gly257 lines the NADPH pocket. The tract at residues Ile261–Gln281 is disordered. The span at Glu268–Gln281 shows a compositional bias: basic and acidic residues.

The protein belongs to the GTP cyclohydrolase I family. QueF type 2 subfamily. In terms of assembly, homodimer.

It is found in the cytoplasm. The enzyme catalyses 7-aminomethyl-7-carbaguanine + 2 NADP(+) = 7-cyano-7-deazaguanine + 2 NADPH + 3 H(+). The protein operates within tRNA modification; tRNA-queuosine biosynthesis. In terms of biological role, catalyzes the NADPH-dependent reduction of 7-cyano-7-deazaguanine (preQ0) to 7-aminomethyl-7-deazaguanine (preQ1). The chain is NADPH-dependent 7-cyano-7-deazaguanine reductase from Vibrio vulnificus (strain YJ016).